We begin with the raw amino-acid sequence, 178 residues long: ATP synthase subunit delta (178 aa).

The protein belongs to the ATPase delta chain family. F-type ATPases have 2 components, F(1) - the catalytic core - and F(0) - the membrane proton channel. F(1) has five subunits: alpha(3), beta(3), gamma(1), delta(1), epsilon(1). F(0) has three main subunits: a(1), b(2) and c(10-14). The alpha and beta chains form an alternating ring which encloses part of the gamma chain. F(1) is attached to F(0) by a central stalk formed by the gamma and epsilon chains, while a peripheral stalk is formed by the delta and b chains.

Its subcellular location is the cell inner membrane. F(1)F(0) ATP synthase produces ATP from ADP in the presence of a proton or sodium gradient. F-type ATPases consist of two structural domains, F(1) containing the extramembraneous catalytic core and F(0) containing the membrane proton channel, linked together by a central stalk and a peripheral stalk. During catalysis, ATP synthesis in the catalytic domain of F(1) is coupled via a rotary mechanism of the central stalk subunits to proton translocation. Functionally, this protein is part of the stalk that links CF(0) to CF(1). It either transmits conformational changes from CF(0) to CF(1) or is implicated in proton conduction. This Dechloromonas aromatica (strain RCB) protein is ATP synthase subunit delta.